A 478-amino-acid polypeptide reads, in one-letter code: MEKLLNELSSENRPAYSVDSDVEIDAQIPENLKRSSGLGLPSITENDLSRHFTNLSRKNYALSTSFYPLGSCTMKYNPLINERVAKNEAFNFIHPYQPGKSMQGVLKIMYELEKDLCEISGMDCFSLQQAAGAHGEFTGLLIIAKYFKSIKQKRTKIIIPDTAHGTNPASAALAGFGTVSLKSESDGSILPEKLKKILTPEIAAVMLTVPNTLGAFEKNIPEISRIVHENGSLLYYDGANLNAVMGIVRPGDMGFDVMHINLHKTFSTPHGGGGPGSGPVGVKEFLEPFLPVPKIESRKSKFVLNYKKPKSIGKLKAFLGNFPVILKAYVYIKSLGAEGLKNVSEWAVLNANYMLARFKDKIDVPAGSRCMHEFVLSPKSLFKNNVKTLDVAKRLLDYGYYAPTIYFPLIVEEAVMLEPTETESKETMDAFIDTLIKIIYEEATQEPQKLKEAPFNTSVRRLNEVEAARNPVLKWKKA.

At lysine 264 the chain carries N6-(pyridoxal phosphate)lysine.

Belongs to the GcvP family. C-terminal subunit subfamily. In terms of assembly, the glycine cleavage system is composed of four proteins: P, T, L and H. In this organism, the P 'protein' is a heterodimer of two subunits. It depends on pyridoxal 5'-phosphate as a cofactor.

It catalyses the reaction N(6)-[(R)-lipoyl]-L-lysyl-[glycine-cleavage complex H protein] + glycine + H(+) = N(6)-[(R)-S(8)-aminomethyldihydrolipoyl]-L-lysyl-[glycine-cleavage complex H protein] + CO2. The glycine cleavage system catalyzes the degradation of glycine. The P protein binds the alpha-amino group of glycine through its pyridoxal phosphate cofactor; CO(2) is released and the remaining methylamine moiety is then transferred to the lipoamide cofactor of the H protein. The polypeptide is Probable glycine dehydrogenase (decarboxylating) subunit 2 (Endomicrobium trichonymphae).